Consider the following 254-residue polypeptide: Ribosomal RNA small subunit methyltransferase J (254 aa).

Residues 106–107 (RD) and Asp177 contribute to the S-adenosyl-L-methionine site.

The protein belongs to the methyltransferase superfamily. RsmJ family.

Its subcellular location is the cytoplasm. It catalyses the reaction guanosine(1516) in 16S rRNA + S-adenosyl-L-methionine = N(2)-methylguanosine(1516) in 16S rRNA + S-adenosyl-L-homocysteine + H(+). Its function is as follows. Specifically methylates the guanosine in position 1516 of 16S rRNA. This chain is Ribosomal RNA small subunit methyltransferase J, found in Nitrosococcus oceani (strain ATCC 19707 / BCRC 17464 / JCM 30415 / NCIMB 11848 / C-107).